Consider the following 433-residue polypeptide: Glutamate-1-semialdehyde 2,1-aminomutase (433 aa).

Lys-273 carries the post-translational modification N6-(pyridoxal phosphate)lysine.

It belongs to the class-III pyridoxal-phosphate-dependent aminotransferase family. HemL subfamily. In terms of assembly, homodimer. Requires pyridoxal 5'-phosphate as cofactor.

The protein resides in the cytoplasm. The catalysed reaction is (S)-4-amino-5-oxopentanoate = 5-aminolevulinate. It participates in porphyrin-containing compound metabolism; protoporphyrin-IX biosynthesis; 5-aminolevulinate from L-glutamyl-tRNA(Glu): step 2/2. The chain is Glutamate-1-semialdehyde 2,1-aminomutase from Ralstonia pickettii (strain 12J).